Reading from the N-terminus, the 312-residue chain is Ribonuclease H2 subunit B (312 aa).

At A2 the chain carries N-acetylalanine. Residues 236-256 (EPSASLPNPPSKKIKLSDEPV) form a disordered region. K295 is subject to N6-acetyllysine. Residue S296 is modified to Phosphoserine.

It belongs to the RNase H2 subunit B family. The RNase H2 complex is a heterotrimer composed of the catalytic subunit RNASEH2A and the non-catalytic subunits RNASEH2B and RNASEH2C. Widely expressed.

The protein localises to the nucleus. Non catalytic subunit of RNase H2, an endonuclease that specifically degrades the RNA of RNA:DNA hybrids. Participates in DNA replication, possibly by mediating the removal of lagging-strand Okazaki fragment RNA primers during DNA replication. Mediates the excision of single ribonucleotides from DNA:RNA duplexes. This chain is Ribonuclease H2 subunit B (RNASEH2B), found in Homo sapiens (Human).